Consider the following 174-residue polypeptide: Peptidyl-prolyl cis-trans isomerase D, mitochondrial (174 aa).

The PPIase cyclophilin-type domain maps to phenylalanine 10–glutamine 173.

The protein belongs to the cyclophilin-type PPIase family. PPIase D subfamily.

It localises to the mitochondrion. The catalysed reaction is [protein]-peptidylproline (omega=180) = [protein]-peptidylproline (omega=0). Its activity is regulated as follows. Binds cyclosporin A (CsA). CsA mediates some of its effects via an inhibitory action on PPIase. Its function is as follows. PPIases accelerate the folding of proteins. It catalyzes the cis-trans isomerization of proline imidic peptide bonds in oligopeptides. The sequence is that of Peptidyl-prolyl cis-trans isomerase D, mitochondrial (cypD) from Dictyostelium discoideum (Social amoeba).